The primary structure comprises 106 residues: Small ribosomal subunit protein uS10 (106 aa).

This sequence belongs to the universal ribosomal protein uS10 family. As to quaternary structure, part of the 30S ribosomal subunit.

In terms of biological role, involved in the binding of tRNA to the ribosomes. This Synechococcus sp. (strain CC9311) protein is Small ribosomal subunit protein uS10.